The following is a 486-amino-acid chain: Kynurenine 3-monooxygenase (486 aa).

FAD-binding positions include valine 19, 37 to 40, and alanine 57; that span reads YEAR. L-kynurenine is bound by residues arginine 85 and tyrosine 99. Residues arginine 111, leucine 136, threonine 172, aspartate 304, and 317-318 each bind FAD; that span reads MN. Residues asparagine 363 and tyrosine 398 each coordinate L-kynurenine. 2 helical membrane-spanning segments follow: residues 385–404 and 425–445; these read FLHA…VTFS and GLFF…IHYM. Residue asparagine 465 is glycosylated (N-linked (GlcNAc...) asparagine).

This sequence belongs to the aromatic-ring hydroxylase family. KMO subfamily. FAD serves as cofactor. In terms of tissue distribution, highest levels in placenta and liver. Detectable in kidney.

It is found in the mitochondrion outer membrane. It catalyses the reaction L-kynurenine + NADPH + O2 + H(+) = 3-hydroxy-L-kynurenine + NADP(+) + H2O. It participates in cofactor biosynthesis; NAD(+) biosynthesis; quinolinate from L-kynurenine: step 1/3. Functionally, catalyzes the hydroxylation of L-kynurenine (L-Kyn) to form 3-hydroxy-L-kynurenine (L-3OHKyn). Required for synthesis of quinolinic acid, a neurotoxic NMDA receptor antagonist and potential endogenous inhibitor of NMDA receptor signaling in axonal targeting, synaptogenesis and apoptosis during brain development. Quinolinic acid may also affect NMDA receptor signaling in pancreatic beta cells, osteoblasts, myocardial cells, and the gastrointestinal tract. The polypeptide is Kynurenine 3-monooxygenase (Homo sapiens (Human)).